A 124-amino-acid chain; its full sequence is Glycine cleavage system H protein (124 aa).

In terms of domain architecture, Lipoyl-binding spans 22–104 (LVITGITDHA…YGKGWIYKIK (83 aa)). N6-lipoyllysine is present on lysine 63.

The protein belongs to the GcvH family. In terms of assembly, the glycine cleavage system is composed of four proteins: P, T, L and H. The cofactor is (R)-lipoate.

Functionally, the glycine cleavage system catalyzes the degradation of glycine. The H protein shuttles the methylamine group of glycine from the P protein to the T protein. This chain is Glycine cleavage system H protein, found in Acinetobacter baumannii (strain ACICU).